The chain runs to 903 residues: DNA transposase THAP9 (903 aa).

The THAP-type zinc-finger motif lies at 1 to 89 (MTRSCSAVGC…LKKGAVPSVS (89 aa)). The short motif at 123 to 126 (DHNY) is the HCFC1-binding motif (HBM) element.

Active transposase that specifically recognizes the bipartite 5'-TXXGGGX(A/T)-3' consensus motif and mediates transposition. This chain is DNA transposase THAP9 (THAP9), found in Homo sapiens (Human).